Consider the following 86-residue polypeptide: Small ribosomal subunit protein bS18 (86 aa).

The protein belongs to the bacterial ribosomal protein bS18 family. In terms of assembly, part of the 30S ribosomal subunit. Forms a tight heterodimer with protein bS6.

In terms of biological role, binds as a heterodimer with protein bS6 to the central domain of the 16S rRNA, where it helps stabilize the platform of the 30S subunit. The chain is Small ribosomal subunit protein bS18 from Campylobacter jejuni subsp. jejuni serotype O:6 (strain 81116 / NCTC 11828).